Here is a 154-residue protein sequence, read N- to C-terminus: Superoxide dismutase [Cu-Zn] (154 aa).

Positions 47, 49, and 64 each coordinate Cu cation. A disulfide bridge connects residues C58 and C147. The disordered stretch occupies residues 62–89 (GPHFNPFKKNHGGPTDSERHVGDLGNVK). The Zn(2+) site is built by H64, H72, H81, and D84. H121 provides a ligand contact to Cu cation. R144 is a substrate binding site.

The protein belongs to the Cu-Zn superoxide dismutase family. As to quaternary structure, homodimer. Cu cation serves as cofactor. The cofactor is Zn(2+).

Its subcellular location is the cytoplasm. The enzyme catalyses 2 superoxide + 2 H(+) = H2O2 + O2. In terms of biological role, destroys radicals which are normally produced within the cells and which are toxic to biological systems. This chain is Superoxide dismutase [Cu-Zn] (SOD1), found in Yarrowia lipolytica (strain CLIB 122 / E 150) (Yeast).